A 203-amino-acid polypeptide reads, in one-letter code: Large ribosomal subunit protein uL22 (203 aa).

Positions 138–167 (PENTQSGALSQQSQAEQPQNDPENGVDSQL) are enriched in polar residues. The segment at 138-203 (PENTQSGALS…TVLAQEKEVK (66 aa)) is disordered. Over residues 168–177 (SAKTNSTTTA) the composition is skewed to low complexity. Residues 183–196 (ADNSTKNDATNTVL) are compositionally biased toward polar residues.

This sequence belongs to the universal ribosomal protein uL22 family. Part of the 50S ribosomal subunit.

Functionally, this protein binds specifically to 23S rRNA; its binding is stimulated by other ribosomal proteins, e.g. L4, L17, and L20. It is important during the early stages of 50S assembly. It makes multiple contacts with different domains of the 23S rRNA in the assembled 50S subunit and ribosome. Its function is as follows. The globular domain of the protein is located near the polypeptide exit tunnel on the outside of the subunit, while an extended beta-hairpin is found that lines the wall of the exit tunnel in the center of the 70S ribosome. This Mesomycoplasma hyopneumoniae (strain 7448) (Mycoplasma hyopneumoniae) protein is Large ribosomal subunit protein uL22.